The sequence spans 301 residues: GTPase Era (301 aa).

Residues 4–173 form the Era-type G domain; the sequence is KAGFVALIGK…LECISKHLIP (170 aa). The segment at 12–19 is G1; the sequence is GKPNAGKS. A GTP-binding site is contributed by 12–19; that stretch reads GKPNAGKS. Residues 38 to 42 form a G2 region; sequence NATRK. The tract at residues 64-67 is G3; sequence DTPG. GTP contacts are provided by residues 64-68 and 122-125; these read DTPGL and SKID. Positions 122–125 are G4; the sequence is SKID. Residues 152-154 are G5; that stretch reads LSA. One can recognise a KH type-2 domain in the interval 204-280; it reads LSDEIPYESD…FLNLQVIAQK (77 aa).

This sequence belongs to the TRAFAC class TrmE-Era-EngA-EngB-Septin-like GTPase superfamily. Era GTPase family. In terms of assembly, monomer.

Its subcellular location is the cytoplasm. It is found in the cell inner membrane. An essential GTPase that binds both GDP and GTP, with rapid nucleotide exchange. Plays a role in 16S rRNA processing and 30S ribosomal subunit biogenesis and possibly also in cell cycle regulation and energy metabolism. The sequence is that of GTPase Era from Helicobacter pylori (strain HPAG1).